A 706-amino-acid chain; its full sequence is MANENHGSPREGASLLSHSPGTSSQSQPCSPKPVRLVQDLPEELVHAGWEKCWSRRESRPYYFNRFTNQSLWEMPVLGQHDVLSDPLGLNATPLPQDSSLVETPPVENKSRKRQLSEEQPSGNGVKKPKIEIPVTPTSQSVPSSPSIPGTPTLKIWGSSTEDKQAALLRPTEVYWDLDIQTNAVIKHRGPSEVLPPHPDVELLRSQLILKLRQHYRELCQQREGIEPPRESFNRWMLERKVVDKGCDPLLPSNCEPVVSPSMFREIMNDIPIRLSRIKFREEAKRLLFKYAEAARRLIESRSASPDSRKVVKWNVEDTFSWLRKEHSASKEDYMDRLEHLRRQCGPHVSAAAKDSVEGICSKIYHISLEYVKRIREKHLAVLKENNIPEEVEASELEPRLVYCYPVRLAVSAPPMPSVEMHVENSVVCIRYKGEMVKVSRSYFSKLWLLYRYSCVDDSAFERFLPRVWCLLRRYQMMFGVGLYEGTGLQGSLPVHVFETLHRLFGVSFECFASPLNCYFRQYCSAFPDTDGYFGSRGPCLDFTPLSGSFEANPPFCEELMDAMVSHFEKLLESSAEPLSFIVFIPEWREPPTPALTRMEQSRFKRHQLVLPAFEHEYRSGSQHICKKEEMHYKAVHNTAVLFLQNGPGFAKWGPTPERLQELTAAYKQSGRSHGSSSSSSSSSSSSEAKDRDSGREQGPSREPHPT.

The segment at 1 to 34 (MANENHGSPREGASLLSHSPGTSSQSQPCSPKPV) is disordered. Over residues 16-29 (LSHSPGTSSQSQPC) the composition is skewed to polar residues. Phosphoserine is present on serine 30. The WW domain maps to 43–77 (ELVHAGWEKCWSRRESRPYYFNRFTNQSLWEMPVL). The segment at 88-148 (GLNATPLPQD…QSVPSSPSIP (61 aa)) is disordered. Positions 109–113 (KSRKR) match the Nuclear localization signal motif. Serine 116 is subject to Phosphoserine. The segment covering 132–147 (IPVTPTSQSVPSSPSI) has biased composition (low complexity). Position 152 is a phosphothreonine (threonine 152). Residues arginine 234 and arginine 264 each coordinate substrate. 552–555 (NPPF) contributes to the S-adenosyl-L-methionine binding site. Residues glutamate 557 and 587-591 (WREPP) each bind substrate. 613–615 (FEH) serves as a coordination point for S-adenosyl-L-methionine. A disordered region spans residues 663–706 (TAAYKQSGRSHGSSSSSSSSSSSSEAKDRDSGREQGPSREPHPT). The Nuclear localization signal signature appears at 668–686 (QSGRSHGSSSSSSSSSSSS). Residues 675 to 686 (SSSSSSSSSSSS) show a composition bias toward low complexity. Residues 687–706 (EAKDRDSGREQGPSREPHPT) are compositionally biased toward basic and acidic residues.

Belongs to the CAPAM family. In terms of assembly, interacts with POLR2A; interacts with the phosphorylated C-terminal domain (CTD) of POLR2A.

The protein localises to the nucleus. It catalyses the reaction a 5'-end (N(7)-methyl 5'-triphosphoguanosine)-(2'-O-methyladenosine) in mRNA + S-adenosyl-L-methionine = a 5'-end (N(7)-methyl 5'-triphosphoguanosine)-(N(6),2'-O-dimethyladenosine) in mRNA + S-adenosyl-L-homocysteine + H(+). Its activity is regulated as follows. Cap-specific adenosine methyltransferase activity is inhibited by zinc. In terms of biological role, cap-specific adenosine methyltransferase that catalyzes formation of N(6),2'-O-dimethyladenosine cap (m6A(m)) by methylating the adenosine at the second transcribed position of capped mRNAs. Recruited to the early elongation complex of RNA polymerase II (RNAPII) via interaction with POLR2A and mediates formation of m6A(m) co-transcriptionally. This is mRNA (2'-O-methyladenosine-N(6)-)-methyltransferase from Mus musculus (Mouse).